Here is a 521-residue protein sequence, read N- to C-terminus: AAA ATPase forming ring-shaped complexes (521 aa).

Residues threonine 4–glutamine 44 adopt a coiled-coil conformation. Position 235–240 (glycine 235–methionine 240) interacts with ATP.

This sequence belongs to the AAA ATPase family. Homohexamer. Assembles into a hexameric ring structure.

The protein is AAA ATPase forming ring-shaped complexes of Bifidobacterium longum (strain DJO10A).